Consider the following 344-residue polypeptide: Anthranilate phosphoribosyltransferase (344 aa).

5-phospho-alpha-D-ribose 1-diphosphate-binding positions include Gly80, 83-84 (GD), Thr88, 90-93 (NIST), 108-116 (KHGNRSISS), and Ser120. Gly80 contributes to the anthranilate binding site. Residue Ser92 coordinates Mg(2+). Asn111 provides a ligand contact to anthranilate. Arg166 provides a ligand contact to anthranilate. Residues Asp229 and Glu230 each contribute to the Mg(2+) site.

It belongs to the anthranilate phosphoribosyltransferase family. As to quaternary structure, homodimer. The cofactor is Mg(2+).

It carries out the reaction N-(5-phospho-beta-D-ribosyl)anthranilate + diphosphate = 5-phospho-alpha-D-ribose 1-diphosphate + anthranilate. It functions in the pathway amino-acid biosynthesis; L-tryptophan biosynthesis; L-tryptophan from chorismate: step 2/5. Its function is as follows. Catalyzes the transfer of the phosphoribosyl group of 5-phosphorylribose-1-pyrophosphate (PRPP) to anthranilate to yield N-(5'-phosphoribosyl)-anthranilate (PRA). This is Anthranilate phosphoribosyltransferase from Chloroherpeton thalassium (strain ATCC 35110 / GB-78).